A 231-amino-acid chain; its full sequence is Large ribosomal subunit protein uL1 (231 aa).

The protein belongs to the universal ribosomal protein uL1 family. Part of the 50S ribosomal subunit.

Its function is as follows. Binds directly to 23S rRNA. The L1 stalk is quite mobile in the ribosome, and is involved in E site tRNA release. Protein L1 is also a translational repressor protein, it controls the translation of the L11 operon by binding to its mRNA. The protein is Large ribosomal subunit protein uL1 of Carboxydothermus hydrogenoformans (strain ATCC BAA-161 / DSM 6008 / Z-2901).